Reading from the N-terminus, the 643-residue chain is NAD-dependent malic enzyme, mitochondrial (643 aa).

Residues 1 to 38 (PRVRSFIAHQSGITSVIRRSPDIAHRMVRSLSVSSQRN) constitute a mitochondrion transit peptide. Fumarate contacts are provided by glutamine 116, arginine 119, and arginine 143. The active-site Proton donor is the tyrosine 164. Arginine 219 provides a ligand contact to (S)-malate. Residue arginine 219 participates in NAD(+) binding. Catalysis depends on lysine 237, which acts as the Proton acceptor. Residues glutamate 309 and aspartate 310 each contribute to the a divalent metal cation site. Residues asparagine 313, aspartate 333, alanine 366, alanine 369, and asparagine 472 each coordinate NAD(+). Aspartate 333 serves as a coordination point for a divalent metal cation. Asparagine 472 and asparagine 516 together coordinate (S)-malate.

Belongs to the malic enzymes family. In terms of assembly, homotetramer. Mg(2+) serves as cofactor. The cofactor is Mn(2+).

The protein localises to the mitochondrion matrix. It catalyses the reaction (S)-malate + NAD(+) = pyruvate + CO2 + NADH. The catalysed reaction is oxaloacetate + H(+) = pyruvate + CO2. Subject to allosteric activation by fumarate. Functionally, NAD-dependent mitochondrial malic enzyme that catalyzes the oxidative decarboxylation of malate to pyruvate. This Ascaris suum (Pig roundworm) protein is NAD-dependent malic enzyme, mitochondrial.